The chain runs to 244 residues: Troponin I, cardiac muscle (244 aa).

Residues 1–25 (MSDEEEVTYEEEEEEYVEEEEEEVV) are compositionally biased toward acidic residues. Residues 1–67 (MSDEEEVTYE…PQVKRKPKIS (67 aa)) are disordered. S2 carries the post-translational modification N-acetylserine. A Phosphoserine; by CK2 modification is found at S2. Pro residues predominate over residues 27-42 (PEPPKPAPPPAAPPPL).

Belongs to the troponin I family. In terms of assembly, binds to actin and tropomyosin. Heart.

Its function is as follows. Troponin I is the inhibitory subunit of troponin, the thin filament regulatory complex which confers calcium-sensitivity to striated muscle actomyosin ATPase activity. This chain is Troponin I, cardiac muscle (tnni3), found in Xenopus laevis (African clawed frog).